The chain runs to 55 residues: Spermatid nuclear transition protein 1 (55 aa).

Residues 1-42 (MSTSRKLKSQGTRRGKNRTPHKGVKRGCSKRKYRKSSLKSRK) show a composition bias toward basic residues. The disordered stretch occupies residues 1-55 (MSTSRKLKSQGTRRGKNRTPHKGVKRGCSKRKYRKSSLKSRKRCDDANRNFRSHL). Residues S9, S36, S37, and S40 each carry the phosphoserine modification.

Belongs to the nuclear transition protein 1 family. In terms of tissue distribution, testis.

It localises to the nucleus. It is found in the chromosome. Plays a key role in the replacement of histones to protamine in the elongating spermatids of mammals. In condensing spermatids, loaded onto the nucleosomes, where it promotes the recruitment and processing of protamines, which are responsible for histone eviction. The sequence is that of Spermatid nuclear transition protein 1 (TNP1) from Ovis aries (Sheep).